We begin with the raw amino-acid sequence, 164 residues long: Lipocalin-like 1 protein (164 aa).

It belongs to the calycin superfamily. Lipocalin family.

The chain is Lipocalin-like 1 protein (LCNL1) from Homo sapiens (Human).